A 146-amino-acid polypeptide reads, in one-letter code: MTIKLHDLRPAPGSKTPRTRVGRGEGSKGKTAGRGTKGTKARKQVPTTFEGGQMPIHMRLPKLKGFRNRFRTEYEIVNVGDIARLFPEGGTVGVDELVAKGAVRKNSLVKVLGDGKLTVKVDVTAHKFSGSAREQITAAGGSVTEL.

The interval 1-54 (MTIKLHDLRPAPGSKTPRTRVGRGEGSKGKTAGRGTKGTKARKQVPTTFEGGQM) is disordered.

Belongs to the universal ribosomal protein uL15 family. In terms of assembly, part of the 50S ribosomal subunit.

Functionally, binds to the 23S rRNA. This chain is Large ribosomal subunit protein uL15, found in Mycobacterium marinum (strain ATCC BAA-535 / M).